We begin with the raw amino-acid sequence, 499 residues long: Diacylglycerol kinase 1 (499 aa).

The DAGKc domain occupies 41–194 (APCCPVVVFI…IDSWHIIMRM (154 aa)). The interval 442–479 (PCKSKSVNDPSSPMCCSNHDDDERNSLEDEDEWEEGRK) is disordered. Residues 446–456 (KSVNDPSSPMC) show a composition bias toward polar residues. Residues 459–468 (NHDDDERNSL) show a composition bias toward basic and acidic residues.

Belongs to the eukaryotic diacylglycerol kinase family. As to quaternary structure, monomer. In terms of tissue distribution, highly expressed in roots.

The catalysed reaction is a 1,2-diacyl-sn-glycerol + ATP = a 1,2-diacyl-sn-glycero-3-phosphate + ADP + H(+). Its function is as follows. Phosphorylates the second messenger diacylglycerol (DAG) to generate phosphatidic acid (PA), another important signaling molecule. PA is required for plant development and responses to abiotic stress. May play a role in disease resistance responses to pathogen attack. Modulates root architecture by regulating the ratio of DAG and PA, which have opposite effect on the promotion or suppression of lateral roots vs seminal roots. Suppresses lateral root number, but promotes seminal root and crown root thickness. The protein is Diacylglycerol kinase 1 of Oryza sativa subsp. japonica (Rice).